The chain runs to 387 residues: 3-ketoacyl-CoA thiolase (387 aa).

Cys-91 functions as the Acyl-thioester intermediate in the catalytic mechanism. Active-site proton acceptor residues include His-343 and Cys-373.

Belongs to the thiolase-like superfamily. Thiolase family. Heterotetramer of two alpha chains (FadB) and two beta chains (FadA).

It is found in the cytoplasm. It carries out the reaction an acyl-CoA + acetyl-CoA = a 3-oxoacyl-CoA + CoA. It functions in the pathway lipid metabolism; fatty acid beta-oxidation. Its function is as follows. Catalyzes the final step of fatty acid oxidation in which acetyl-CoA is released and the CoA ester of a fatty acid two carbons shorter is formed. This Escherichia coli O6:K15:H31 (strain 536 / UPEC) protein is 3-ketoacyl-CoA thiolase.